A 573-amino-acid polypeptide reads, in one-letter code: Delta 8-(E)-sphingolipid desaturase (573 aa).

Residues 2–77 (SRVLSRRDIA…FKIWKIGRID (76 aa)) form the Cytochrome b5 heme-binding domain. Heme-binding residues include His-37 and His-60. Residues 228–248 (LFGISFYLLSLKWFAISAICL) traverse the membrane as a helical segment. Residues 260–264 (HDAGH) carry the Histidine box-1 motif. Residues 273–293 (VDNIIGMTVASWIGGLSLGWW) form a helical membrane-spanning segment. The Histidine box-2 signature appears at 297 to 301 (HDVHH). 3 helical membrane-spanning segments follow: residues 353–372 (YLYYPILCFGRFNLYRLSWM), 393–413 (LAELSFFNYWFFYLIIYKQMP), and 422–442 (VMISHIATMIVHVQITLSHFA). Residues 481 to 485 (QVIHH) carry the Histidine box-3 motif.

The protein belongs to the fatty acid desaturase type 1 family.

The protein resides in the membrane. It catalyses the reaction an N-acylsphing-4-enine + 2 Fe(II)-[cytochrome b5] + O2 + 2 H(+) = a (4E,8E)-4-sphinga-4,8-dienine ceramide + 2 Fe(III)-[cytochrome b5] + 2 H2O. It functions in the pathway lipid metabolism; sphingolipid metabolism. Functionally, delta(8)-fatty-acid desaturase which introduces a double bond at the 8-position in the long-chain base (LCB) of ceramides. Required for the formation of the di-unsaturated sphingoid base (E,E)-sphinga-4,8-dienine during glucosylceramide (GluCer) biosynthesis. The chain is Delta 8-(E)-sphingolipid desaturase from Kluyveromyces lactis (Yeast).